A 105-amino-acid chain; its full sequence is Large ribosomal subunit protein uL24 (105 aa).

Belongs to the universal ribosomal protein uL24 family. In terms of assembly, part of the 50S ribosomal subunit.

One of two assembly initiator proteins, it binds directly to the 5'-end of the 23S rRNA, where it nucleates assembly of the 50S subunit. Functionally, one of the proteins that surrounds the polypeptide exit tunnel on the outside of the subunit. The sequence is that of Large ribosomal subunit protein uL24 from Methylococcus capsulatus (strain ATCC 33009 / NCIMB 11132 / Bath).